The chain runs to 412 residues: Acetylornithine aminotransferase (412 aa).

Residues 109–110 (GA) and phenylalanine 142 contribute to the pyridoxal 5'-phosphate site. Arginine 145 contributes to the N(2)-acetyl-L-ornithine binding site. Residue 233 to 236 (DEVQ) coordinates pyridoxal 5'-phosphate. Position 262 is an N6-(pyridoxal phosphate)lysine (lysine 262). Serine 289 serves as a coordination point for N(2)-acetyl-L-ornithine. Threonine 290 contributes to the pyridoxal 5'-phosphate binding site.

Belongs to the class-III pyridoxal-phosphate-dependent aminotransferase family. ArgD subfamily. As to quaternary structure, homodimer. It depends on pyridoxal 5'-phosphate as a cofactor.

Its subcellular location is the cytoplasm. It catalyses the reaction N(2)-acetyl-L-ornithine + 2-oxoglutarate = N-acetyl-L-glutamate 5-semialdehyde + L-glutamate. The protein operates within amino-acid biosynthesis; L-arginine biosynthesis; N(2)-acetyl-L-ornithine from L-glutamate: step 4/4. This chain is Acetylornithine aminotransferase, found in Thermosynechococcus vestitus (strain NIES-2133 / IAM M-273 / BP-1).